The chain runs to 376 residues: Spermidine/putrescine import ATP-binding protein PotA (376 aa).

Residues 6–236 enclose the ABC transporter domain; that stretch reads INIVNVNKSF…PADTFVADFL (231 aa). 38 to 45 is a binding site for ATP; sequence GPSGCGKT.

The protein belongs to the ABC transporter superfamily. Spermidine/putrescine importer (TC 3.A.1.11.1) family. In terms of assembly, the complex is composed of two ATP-binding proteins (PotA), two transmembrane proteins (PotB and PotC) and a solute-binding protein (PotD).

The protein localises to the cell inner membrane. It catalyses the reaction ATP + H2O + polyamine-[polyamine-binding protein]Side 1 = ADP + phosphate + polyamineSide 2 + [polyamine-binding protein]Side 1.. In terms of biological role, part of the ABC transporter complex PotABCD involved in spermidine/putrescine import. Responsible for energy coupling to the transport system. The chain is Spermidine/putrescine import ATP-binding protein PotA from Fusobacterium nucleatum subsp. nucleatum (strain ATCC 25586 / DSM 15643 / BCRC 10681 / CIP 101130 / JCM 8532 / KCTC 2640 / LMG 13131 / VPI 4355).